Consider the following 279-residue polypeptide: Urease accessory protein UreD (279 aa).

This sequence belongs to the UreD family. UreD, UreF and UreG form a complex that acts as a GTP-hydrolysis-dependent molecular chaperone, activating the urease apoprotein by helping to assemble the nickel containing metallocenter of UreC. The UreE protein probably delivers the nickel.

The protein resides in the cytoplasm. Required for maturation of urease via the functional incorporation of the urease nickel metallocenter. In Nostoc punctiforme (strain ATCC 29133 / PCC 73102), this protein is Urease accessory protein UreD.